The following is a 281-amino-acid chain: Large ribosomal subunit protein uL2 (281 aa).

Positions 213–281 (RNRHKGIRPT…LIIRRRKESK (69 aa)) are disordered.

Belongs to the universal ribosomal protein uL2 family. As to quaternary structure, part of the 50S ribosomal subunit. Forms a bridge to the 30S subunit in the 70S ribosome.

One of the primary rRNA binding proteins. Required for association of the 30S and 50S subunits to form the 70S ribosome, for tRNA binding and peptide bond formation. It has been suggested to have peptidyltransferase activity; this is somewhat controversial. Makes several contacts with the 16S rRNA in the 70S ribosome. In Mycoplasmopsis pulmonis (strain UAB CTIP) (Mycoplasma pulmonis), this protein is Large ribosomal subunit protein uL2.